The sequence spans 268 residues: Probable membrane transporter protein HI_0806 (268 aa).

A run of 8 helical transmembrane segments spans residues 6 to 26 (IFIL…FGIG), 46 to 66 (VISA…LLFF), 79 to 99 (ILWS…SFYF), 101 to 121 (TAII…KTFL), 147 to 167 (GGGL…APLV), 178 to 198 (IAVY…YGYL), 212 to 232 (LGLN…MSFF), and 248 to 268 (LLAI…FVFH).

The protein belongs to the 4-toluene sulfonate uptake permease (TSUP) (TC 2.A.102) family.

Its subcellular location is the cell membrane. The chain is Probable membrane transporter protein HI_0806 from Haemophilus influenzae (strain ATCC 51907 / DSM 11121 / KW20 / Rd).